A 90-amino-acid polypeptide reads, in one-letter code: FDVPEPFKWVDHFFYEKLDEQHKGLFFAFFDWGKGPDYWGKDTISLSQEQVDAKFELDLEYGIFYGNGETIENPSENGDLQGIFFSWGSE.

The protein resides in the secreted. Potent anticoagulant inhibiting the amidolytic activity of factor Xa (F10) (Ki=4nM) and reducing its ability to activate prothrombin (F2) in the prothrombinase complex (EC(50)=40nM). The chain is Leech factor Xa inhibitor from Haementeria depressa (Leech).